The chain runs to 319 residues: ATP-dependent 6-phosphofructokinase (319 aa).

Position 11 (Gly-11) interacts with ATP. 21–25 contributes to the ADP binding site; the sequence is RAVVR. Residues 72 to 73 and 102 to 105 contribute to the ATP site; these read RY and GDGS. Asp-103 provides a ligand contact to Mg(2+). 125-127 lines the substrate pocket; sequence TID. The Proton acceptor role is filled by Asp-127. Arg-154 lines the ADP pocket. Substrate-binding positions include Arg-162 and 169–171; that span reads MGR. ADP is bound by residues 185–187, Arg-211, and 213–215; these read GAE and KKH. Substrate contacts are provided by residues Glu-222, Arg-243, and 249 to 252; that span reads HVQR.

This sequence belongs to the phosphofructokinase type A (PFKA) family. ATP-dependent PFK group I subfamily. Prokaryotic clade 'B1' sub-subfamily. As to quaternary structure, homotetramer. It depends on Mg(2+) as a cofactor.

It localises to the cytoplasm. The enzyme catalyses beta-D-fructose 6-phosphate + ATP = beta-D-fructose 1,6-bisphosphate + ADP + H(+). It participates in carbohydrate degradation; glycolysis; D-glyceraldehyde 3-phosphate and glycerone phosphate from D-glucose: step 3/4. Its activity is regulated as follows. Allosterically activated by ADP and other diphosphonucleosides, and allosterically inhibited by phosphoenolpyruvate. Functionally, catalyzes the phosphorylation of D-fructose 6-phosphate to fructose 1,6-bisphosphate by ATP, the first committing step of glycolysis. This is ATP-dependent 6-phosphofructokinase from Listeria welshimeri serovar 6b (strain ATCC 35897 / DSM 20650 / CCUG 15529 / CIP 8149 / NCTC 11857 / SLCC 5334 / V8).